The following is a 113-amino-acid chain: Large ribosomal subunit protein bL19 (113 aa).

It belongs to the bacterial ribosomal protein bL19 family.

Functionally, this protein is located at the 30S-50S ribosomal subunit interface and may play a role in the structure and function of the aminoacyl-tRNA binding site. The sequence is that of Large ribosomal subunit protein bL19 (rplS) from Mycobacterium bovis (strain ATCC BAA-935 / AF2122/97).